Consider the following 283-residue polypeptide: Non-selective voltage-gated ion channel VDAC3 (283 aa).

Cys-2 is subject to N-acetylcysteine. Thr-4 bears the Phosphothreonine mark. An N6-acetyllysine mark is found at Lys-12, Lys-15, and Lys-20. Beta stranded transmembrane passes span 26–35 and 39–47; these read MVKIDLRTKS and VEFSTSGHA. Residue Lys-53 forms a Glycyl lysine isopeptide (Lys-Gly) (interchain with G-Cter in ubiquitin) linkage. Beta stranded transmembrane passes span 54–64, 69–76, and 80–89; these read ASGNLETKYKI, LTFTQKWN, and TLGTEISLEN. At Lys-90 the chain carries N6-acetyllysine. Residues 95-104 traverse the membrane as a beta stranded segment; that stretch reads LKLTLDTIFV. Glycyl lysine isopeptide (Lys-Gly) (interchain with G-Cter in ubiquitin) cross-links involve residues Lys-109 and Lys-110. 10 beta stranded membrane-spanning segments follow: residues 111 to 120, 123 to 130, 137 to 145, 150 to 158, 163 to 175, 178 to 185, 189 to 198, 202 to 211, 218 to 227, and 231 to 238; these read SGKLKASYKR, FSIGSNVD, TIYGWAVLA, LAGYQMSFD, KLSQ…GYKA, FQLHTHVN, EFGGSIYQKV, IETSINLAWT, RFGIAAKYKL, and TSLSAKVN. Phosphoserine is present on Ser-241. NAD(+) is bound by residues 242 to 244 and 260 to 264; these read LIG and SALID. 2 consecutive transmembrane segments (beta stranded) span residues 242–251 and 254–263; these read LIGLGYTQTL and GVKLTLSALI. Lys-266 is subject to N6-acetyllysine; alternate. Lys-266 participates in a covalent cross-link: Glycyl lysine isopeptide (Lys-Gly) (interchain with G-Cter in ubiquitin); alternate. A beta stranded membrane pass occupies residues 273–282; it reads HKVGLGFELE.

This sequence belongs to the eukaryotic mitochondrial porin family. Interacts with ARMC12 in a TBC1D21-dependent manner. Interacts with MISFA. Ubiquitinated by PRKN during mitophagy, leading to its degradation and enhancement of mitophagy. Deubiquitinated by USP30.

The protein resides in the mitochondrion outer membrane. The protein localises to the membrane. It carries out the reaction chloride(in) = chloride(out). The catalysed reaction is K(+)(in) = K(+)(out). Its function is as follows. Non-selective voltage-gated ion channel that mediates the transport of anions and cations through the mitochondrion outer membrane and plasma membrane. Forms a high-conducting channel with a stable open state and a voltage-induced closure with a mild preference for anions over cations. Involved in male fertility and sperm mitochondrial sheath formation. The sequence is that of Non-selective voltage-gated ion channel VDAC3 from Sus scrofa (Pig).